We begin with the raw amino-acid sequence, 494 residues long: MRLTPNYDYEVSSIDKKKRGYIVQIIGPVLDVAFSPGMMPSIYNALVVQGRHKQEPNVTCEVQQLLGNNRVRAVAMSDTDGLMRGMEVIDTGTPISVPVGGSTLGRIFNVLGEPVDQLGPVETNQLSPIHRSAPPFLKLDTRLSIFETGIKVVDLLAPYRRGGKVGLFGGAGVGKTVLIMELINNIAKAYGGVSVFGGVGERTREGNDLYMEMKESGVINQQKLAESKVALVYGQMNEPPGARMRVGLTALTMAEYFRDVNRQDVLLFIDNIFRFVQAGSEVSALLGRMPSAVGYQPTLSTEMGSLQERITSTKEGSITSIQAVYVPADDLTDPAPATTFAHLDATTVLSRSLAAKGIYPAVDPLDSTSMMLQPQIVGEQHYKTAQRVKQTLQRYKELQDIIAILGLDELSDDDRLTVARARKIERFLSQPFFVAEIFTGSPGKYVSLAETIRGCTLILSGEFDDLPEQTFYLVGTIDEVNAKAILEEEKNFTK.

169–176 (GGAGVGKT) contacts ATP.

It belongs to the ATPase alpha/beta chains family. As to quaternary structure, F-type ATPases have 2 components, CF(1) - the catalytic core - and CF(0) - the membrane proton channel. CF(1) has five subunits: alpha(3), beta(3), gamma(1), delta(1), epsilon(1). CF(0) has four main subunits: a(1), b(1), b'(1) and c(9-12).

It is found in the plastid membrane. The catalysed reaction is ATP + H2O + 4 H(+)(in) = ADP + phosphate + 5 H(+)(out). Functionally, produces ATP from ADP in the presence of a proton gradient across the membrane. The catalytic sites are hosted primarily by the beta subunits. The chain is ATP synthase subunit beta, plastid (atpB) from Cuscuta sandwichiana (Kauna'oa).